Here is a 109-residue protein sequence, read N- to C-terminus: MEVKAIHRGARISAQKTRLVADQIRGLPIERALNVLTFSPKKAAGIVKKVVESAIANAEHNEGADIDELKVKSIYVDKATSLKRFTARAKGRGNRIEKQTCHITVTLGN.

Belongs to the universal ribosomal protein uL22 family. In terms of assembly, part of the 50S ribosomal subunit.

In terms of biological role, this protein binds specifically to 23S rRNA; its binding is stimulated by other ribosomal proteins, e.g. L4, L17, and L20. It is important during the early stages of 50S assembly. It makes multiple contacts with different domains of the 23S rRNA in the assembled 50S subunit and ribosome. Its function is as follows. The globular domain of the protein is located near the polypeptide exit tunnel on the outside of the subunit, while an extended beta-hairpin is found that lines the wall of the exit tunnel in the center of the 70S ribosome. The sequence is that of Large ribosomal subunit protein uL22 from Cupriavidus taiwanensis (strain DSM 17343 / BCRC 17206 / CCUG 44338 / CIP 107171 / LMG 19424 / R1) (Ralstonia taiwanensis (strain LMG 19424)).